We begin with the raw amino-acid sequence, 255 residues long: Electron transfer flavoprotein subunit beta (255 aa).

An N-acetylalanine modification is found at Ala-2. AMP is bound by residues Ala-9, 39–42, Cys-66, and 123–134; these read NPFC and GKQAIDDDCNQT. Residues 183 to 205 are recognition loop; sequence ADLRLNEPRYATLPNIMKAKKKK. An N6,N6,N6-trimethyllysine; by ETFBKMT; alternate modification is found at Lys-200. The residue at position 200 (Lys-200) is an N6-acetyllysine; alternate. The residue at position 200 (Lys-200) is an N6-methyllysine; alternate. Lys-203 carries the N6,N6,N6-trimethyllysine; by ETFBKMT modification. An N6-acetyllysine; alternate modification is found at Lys-210. Residue Lys-210 is modified to N6-succinyllysine; alternate. Phosphoserine occurs at positions 223 and 226. Position 238 is an N6-acetyllysine (Lys-238). Lys-248 carries the post-translational modification N6-acetyllysine; alternate. N6-succinyllysine; alternate is present on Lys-248.

This sequence belongs to the ETF beta-subunit/FixA family. Heterodimer composed of ETFA and ETFB. Identified in a complex that contains ETFA, ETFB and ETFRF1. Interacts with ACADM. In terms of processing, methylated. Trimethylation at Lys-200 and Lys-203 may negatively regulate the activity in electron transfer from acyl-CoA dehydrogenases.

Its subcellular location is the mitochondrion matrix. Heterodimeric electron transfer flavoprotein that accepts electrons from several mitochondrial dehydrogenases, including acyl-CoA dehydrogenases, glutaryl-CoA and sarcosine dehydrogenase. It transfers the electrons to the main mitochondrial respiratory chain via ETF-ubiquinone oxidoreductase. Required for normal mitochondrial fatty acid oxidation and normal amino acid metabolism. ETFB binds an AMP molecule that probably has a purely structural role. This chain is Electron transfer flavoprotein subunit beta, found in Mus musculus (Mouse).